A 576-amino-acid polypeptide reads, in one-letter code: Arginine--tRNA ligase (576 aa).

Residues 122–132 (PNVAKEMHVGH) carry the 'HIGH' region motif.

The protein belongs to the class-I aminoacyl-tRNA synthetase family. As to quaternary structure, monomer.

It is found in the cytoplasm. It catalyses the reaction tRNA(Arg) + L-arginine + ATP = L-arginyl-tRNA(Arg) + AMP + diphosphate. The sequence is that of Arginine--tRNA ligase from Hamiltonella defensa subsp. Acyrthosiphon pisum (strain 5AT).